The chain runs to 118 residues: Large ribosomal subunit protein eL22 (118 aa).

It belongs to the eukaryotic ribosomal protein eL22 family.

The chain is Large ribosomal subunit protein eL22 (RPL22) from Tetrahymena thermophila (strain SB210).